Here is a 444-residue protein sequence, read N- to C-terminus: C4-dicarboxylate transport protein 3 (444 aa).

9 helical membrane passes run 22–42 (VLYV…WLWP), 60–80 (LIKM…IAHI), 95–115 (VYFE…GNLV), 162–182 (GEIL…MSLG), 198–218 (AVFG…FGAM), 236–256 (LIAT…GIIA), 321–341 (IYMT…LSFG), 346–366 (ILVV…AGFI), and 399–419 (LTNL…EGEL).

It belongs to the dicarboxylate/amino acid:cation symporter (DAACS) (TC 2.A.23) family.

Its subcellular location is the cell inner membrane. Responsible for the transport of dicarboxylates such as succinate, fumarate, and malate from the periplasm across the membrane. The sequence is that of C4-dicarboxylate transport protein 3 from Bradyrhizobium diazoefficiens (strain JCM 10833 / BCRC 13528 / IAM 13628 / NBRC 14792 / USDA 110).